Reading from the N-terminus, the 505-residue chain is Acetylcholine receptor subunit beta (505 aa).

The first 24 residues, 1 to 24, serve as a signal peptide directing secretion; the sequence is MTPGALLLLLLGVLGAHLAPGARG. The Extracellular segment spans residues 25–245; that stretch reads SEAEGRLREK…VTFYLIIRRK (221 aa). Residues cysteine 152 and cysteine 166 are joined by a disulfide bond. An N-linked (GlcNAc...) asparagine glycan is attached at asparagine 165. 3 helical membrane-spanning segments follow: residues 246–270, 278–295, and 312–333; these read PLFY…VFYL, MGLS…LLLL, and YLMF…VLNL. Residues 334-473 lie on the Cytoplasmic side of the membrane; sequence HHRSPHTHQM…WQFVAMVVDR (140 aa). Residues 365–391 form a disordered region; it reads KPERDQMQEPPSIAPRDSPGSGWGRGT. Tyrosine 394 is modified (phosphotyrosine; by Tyr-kinases). Residues 474–492 form a helical membrane-spanning segment; the sequence is LFLWTFIIFTSVGTLVIFL.

This sequence belongs to the ligand-gated ion channel (TC 1.A.9) family. Acetylcholine receptor (TC 1.A.9.1) subfamily. Beta-1/CHRNB1 sub-subfamily. In terms of assembly, pentamer of two alpha chains, and one each of the beta, delta, and gamma (in immature muscle) or epsilon (in mature muscle) chains. The muscle heteropentamer composed of alpha-1, beta-1, delta, epsilon subunits interacts with the alpha-conotoxin ImII.

The protein localises to the postsynaptic cell membrane. It is found in the cell membrane. The enzyme catalyses K(+)(in) = K(+)(out). It catalyses the reaction Na(+)(in) = Na(+)(out). After binding acetylcholine, the AChR responds by an extensive change in conformation that affects all subunits and leads to opening of an ion-conducting channel across the plasma membrane. The protein is Acetylcholine receptor subunit beta (CHRNB1) of Bos taurus (Bovine).